The chain runs to 167 residues: Small ribosomal subunit protein uS5 (167 aa).

Residues 12 to 75 (LQEKLIAVNR…EKARRNMVTV (64 aa)) form the S5 DRBM domain.

The protein belongs to the universal ribosomal protein uS5 family. Part of the 30S ribosomal subunit. Contacts proteins S4 and S8.

Functionally, with S4 and S12 plays an important role in translational accuracy. Its function is as follows. Located at the back of the 30S subunit body where it stabilizes the conformation of the head with respect to the body. This Shewanella oneidensis (strain ATCC 700550 / JCM 31522 / CIP 106686 / LMG 19005 / NCIMB 14063 / MR-1) protein is Small ribosomal subunit protein uS5.